The following is a 205-amino-acid chain: Transcriptional regulator GfcR (205 aa).

Belongs to the purine/pyrimidine phosphoribosyltransferase family. GfcR subfamily.

The chain is Transcriptional regulator GfcR from Methanococcus maripaludis (strain C5 / ATCC BAA-1333).